Consider the following 170-residue polypeptide: Ribosome maturation factor RimM (170 aa).

Residues 98-170 (EGQYYWADLE…RIELDWDPDF (73 aa)) form the PRC barrel domain.

Belongs to the RimM family. As to quaternary structure, binds ribosomal protein uS19.

The protein localises to the cytoplasm. Functionally, an accessory protein needed during the final step in the assembly of 30S ribosomal subunit, possibly for assembly of the head region. Essential for efficient processing of 16S rRNA. May be needed both before and after RbfA during the maturation of 16S rRNA. It has affinity for free ribosomal 30S subunits but not for 70S ribosomes. The polypeptide is Ribosome maturation factor RimM (Alkalilimnicola ehrlichii (strain ATCC BAA-1101 / DSM 17681 / MLHE-1)).